A 124-amino-acid chain; its full sequence is Large ribosomal subunit protein bL12 (124 aa).

The protein belongs to the bacterial ribosomal protein bL12 family. Homodimer. Part of the ribosomal stalk of the 50S ribosomal subunit. Forms a multimeric L10(L12)X complex, where L10 forms an elongated spine to which 2 to 4 L12 dimers bind in a sequential fashion. Binds GTP-bound translation factors.

In terms of biological role, forms part of the ribosomal stalk which helps the ribosome interact with GTP-bound translation factors. Is thus essential for accurate translation. The sequence is that of Large ribosomal subunit protein bL12 from Allorhizobium ampelinum (strain ATCC BAA-846 / DSM 112012 / S4) (Agrobacterium vitis (strain S4)).